A 1522-amino-acid chain; its full sequence is Paired amphipathic helix protein pst1 (1522 aa).

The segment at T139–P174 is disordered. A PAH 1 domain is found at R178 to G248. The tract at residues Q307–V339 is disordered. The segment covering S328–P337 has biased composition (pro residues). Residues Q345 to V415 form the PAH 2 domain. Disordered stretches follow at residues E422 to V504, A928 to S968, and S1343 to L1522. A compositionally biased stretch (polar residues) spans K426 to R441. Position 442 is a phosphoserine (S442). The segment covering S442–A468 has biased composition (low complexity). T446 bears the Phosphothreonine mark. Positions V504–N576 constitute a PAH 3 domain. The segment covering A928–H960 has biased composition (basic and acidic residues). Polar residues predominate over residues G1385–K1398. The segment covering R1403–E1432 has biased composition (basic and acidic residues). S1443 carries the post-translational modification Phosphoserine. Residues T1461–S1474 are compositionally biased toward basic and acidic residues. Residues V1478–E1487 show a composition bias toward polar residues. The segment covering N1488–L1522 has biased composition (acidic residues).

The protein resides in the nucleus. Has a role in modulating the nuclear import of TF1 virus-like particles. Essential for viability. The protein is Paired amphipathic helix protein pst1 (pst1) of Schizosaccharomyces pombe (strain 972 / ATCC 24843) (Fission yeast).